Reading from the N-terminus, the 49-residue chain is Large ribosomal subunit protein bL33 (49 aa).

It belongs to the bacterial ribosomal protein bL33 family.

The protein is Large ribosomal subunit protein bL33 of Caldanaerobacter subterraneus subsp. tengcongensis (strain DSM 15242 / JCM 11007 / NBRC 100824 / MB4) (Thermoanaerobacter tengcongensis).